Consider the following 748-residue polypeptide: Acyl-coenzyme A oxidase (748 aa).

This sequence belongs to the acyl-CoA oxidase family. Homooctamer. FAD serves as cofactor.

It is found in the peroxisome. The catalysed reaction is a 2,3-saturated acyl-CoA + O2 = a (2E)-enoyl-CoA + H2O2. The protein operates within lipid metabolism; peroxisomal fatty acid beta-oxidation. The sequence is that of Acyl-coenzyme A oxidase (POX1) from Saccharomyces cerevisiae (strain ATCC 204508 / S288c) (Baker's yeast).